The sequence spans 261 residues: Ribosomal RNA small subunit methyltransferase J (261 aa).

Residues 109-110 (RD), 125-126 (ER), and D179 each bind S-adenosyl-L-methionine.

It belongs to the methyltransferase superfamily. RsmJ family.

The protein localises to the cytoplasm. The enzyme catalyses guanosine(1516) in 16S rRNA + S-adenosyl-L-methionine = N(2)-methylguanosine(1516) in 16S rRNA + S-adenosyl-L-homocysteine + H(+). Its function is as follows. Specifically methylates the guanosine in position 1516 of 16S rRNA. The sequence is that of Ribosomal RNA small subunit methyltransferase J from Pseudomonas aeruginosa (strain ATCC 15692 / DSM 22644 / CIP 104116 / JCM 14847 / LMG 12228 / 1C / PRS 101 / PAO1).